A 430-amino-acid polypeptide reads, in one-letter code: Small ribosomal subunit protein uS5m (430 aa).

Positions Ala-108 to Arg-128 are disordered. The span at Arg-111 to Asp-125 shows a compositional bias: basic residues. An S5 DRBM domain is found at Phe-218–Ile-282.

It belongs to the universal ribosomal protein uS5 family. In terms of assembly, component of the mitochondrial ribosome small subunit (28S) which comprises a 12S rRNA and about 30 distinct proteins.

It is found in the mitochondrion. The sequence is that of Small ribosomal subunit protein uS5m (MRPS5) from Bos taurus (Bovine).